Consider the following 559-residue polypeptide: Potassium-transporting ATPase potassium-binding subunit (559 aa).

13 consecutive transmembrane segments (helical) span residues 5–25 (GFLL…PLGS), 27–47 (LARL…RILW), 63–83 (LLAL…LLFW), 132–152 (GLTV…FALI), 170–190 (LVRI…LFFI), 253–273 (LAQM…FGEA), 283–303 (LLWA…WAEV), 327–347 (FGVL…CGAV), 356–376 (ALGG…FGGV), 379–399 (GLYG…LMIG), 416–436 (MTAL…ALAM), 484–504 (LLAF…MAIA), and 524–544 (GALF…LTFI).

The protein belongs to the KdpA family. As to quaternary structure, the system is composed of three essential subunits: KdpA, KdpB and KdpC.

It is found in the cell inner membrane. Part of the high-affinity ATP-driven potassium transport (or Kdp) system, which catalyzes the hydrolysis of ATP coupled with the electrogenic transport of potassium into the cytoplasm. This subunit binds the periplasmic potassium ions and delivers the ions to the membrane domain of KdpB through an intramembrane tunnel. This is Potassium-transporting ATPase potassium-binding subunit from Salmonella enteritidis PT4 (strain P125109).